The chain runs to 472 residues: Adenosylhomocysteinase (472 aa).

The substrate site is built by Thr62, Asp137, and Glu197. 198 to 200 (TTT) serves as a coordination point for NAD(+). Positions 227 and 231 each coordinate substrate. Residues Asn232, 261–266 (GYGDVG), Glu284, Asn319, 340–342 (IGH), and Asn385 contribute to the NAD(+) site.

It belongs to the adenosylhomocysteinase family. Requires NAD(+) as cofactor.

Its subcellular location is the cytoplasm. The enzyme catalyses S-adenosyl-L-homocysteine + H2O = L-homocysteine + adenosine. The protein operates within amino-acid biosynthesis; L-homocysteine biosynthesis; L-homocysteine from S-adenosyl-L-homocysteine: step 1/1. Functionally, may play a key role in the regulation of the intracellular concentration of adenosylhomocysteine. The sequence is that of Adenosylhomocysteinase from Bordetella pertussis (strain Tohama I / ATCC BAA-589 / NCTC 13251).